We begin with the raw amino-acid sequence, 179 residues long: Large ribosomal subunit protein uL5 (179 aa).

The protein belongs to the universal ribosomal protein uL5 family. As to quaternary structure, part of the 50S ribosomal subunit; part of the 5S rRNA/L5/L18/L25 subcomplex. Contacts the 5S rRNA and the P site tRNA. Forms a bridge to the 30S subunit in the 70S ribosome.

In terms of biological role, this is one of the proteins that bind and probably mediate the attachment of the 5S RNA into the large ribosomal subunit, where it forms part of the central protuberance. In the 70S ribosome it contacts protein S13 of the 30S subunit (bridge B1b), connecting the 2 subunits; this bridge is implicated in subunit movement. Contacts the P site tRNA; the 5S rRNA and some of its associated proteins might help stabilize positioning of ribosome-bound tRNAs. The protein is Large ribosomal subunit protein uL5 of Haemophilus ducreyi (strain 35000HP / ATCC 700724).